A 190-amino-acid chain; its full sequence is Anthranilate synthase component 2 (190 aa).

A Glutamine amidotransferase type-1 domain is found at 1–190 (MILLIDNYDS…ILQNFINCLN (190 aa)). 52 to 54 (CPG) provides a ligand contact to L-glutamine. Cysteine 79 serves as the catalytic Nucleophile; for GATase activity. Residues glutamine 83 and 129 to 130 (SL) each bind L-glutamine. Catalysis depends on residues histidine 169 and glutamate 171.

Tetramer of two components I and two components II.

It is found in the plastid. It localises to the cyanelle. It catalyses the reaction chorismate + L-glutamine = anthranilate + pyruvate + L-glutamate + H(+). The protein operates within amino-acid biosynthesis; L-tryptophan biosynthesis; L-tryptophan from chorismate: step 1/5. The polypeptide is Anthranilate synthase component 2 (trpG) (Cyanophora paradoxa).